Reading from the N-terminus, the 221-residue chain is PKHD-type hydroxylase Pro_1271 (221 aa).

One can recognise a Fe2OG dioxygenase domain in the interval 80 to 174 (KVHGVMFSKS…RIVCVGWIQS (95 aa)). The Fe cation site is built by histidine 98, aspartate 100, and histidine 155. Arginine 165 lines the 2-oxoglutarate pocket.

Fe(2+) serves as cofactor. Requires L-ascorbate as cofactor.

In Prochlorococcus marinus (strain SARG / CCMP1375 / SS120), this protein is PKHD-type hydroxylase Pro_1271.